The chain runs to 221 residues: Carotenogenesis protein CarR (221 aa).

Transmembrane regions (helical) follow at residues 56-76 (LGLL…PLLL), 79-99 (APLL…ALSP), 107-127 (LGVG…GAPH), 136-156 (VCTV…LFAL), 166-186 (AVVA…LACE), and 191-211 (HVLS…VVIS).

The protein localises to the cell inner membrane. Functionally, negative regulator of the carotenoid synthesis regulon. It is probably inactivated by protoporphyrin IX in the presence of blue light. Inactivation of CarR leads to loss of negative control over the carotenogenesis protein CarQ. This is Carotenogenesis protein CarR (carR) from Myxococcus xanthus.